The primary structure comprises 248 residues: 3-deoxy-manno-octulosonate cytidylyltransferase (248 aa).

This sequence belongs to the KdsB family. Mg(2+) serves as cofactor.

It localises to the cytoplasm. It catalyses the reaction 3-deoxy-alpha-D-manno-oct-2-ulosonate + CTP = CMP-3-deoxy-beta-D-manno-octulosonate + diphosphate. Its pathway is nucleotide-sugar biosynthesis; CMP-3-deoxy-D-manno-octulosonate biosynthesis; CMP-3-deoxy-D-manno-octulosonate from 3-deoxy-D-manno-octulosonate and CTP: step 1/1. It participates in bacterial outer membrane biogenesis; lipopolysaccharide biosynthesis. In terms of biological role, activates KDO (a required 8-carbon sugar) for incorporation into bacterial lipopolysaccharide in Gram-negative bacteria. This Escherichia coli O157:H7 protein is 3-deoxy-manno-octulosonate cytidylyltransferase.